A 352-amino-acid chain; its full sequence is Protein RecA (352 aa).

67–74 (GPESSGKT) provides a ligand contact to ATP.

It belongs to the RecA family.

The protein localises to the cytoplasm. Functionally, can catalyze the hydrolysis of ATP in the presence of single-stranded DNA, the ATP-dependent uptake of single-stranded DNA by duplex DNA, and the ATP-dependent hybridization of homologous single-stranded DNAs. It interacts with LexA causing its activation and leading to its autocatalytic cleavage. This is Protein RecA from Enterobacter sp. (strain 638).